A 245-amino-acid chain; its full sequence is MIYDIIGDIHGCFHEFMLLTKKLGYVWENDVPIHPNGRKLAFVGDLADRGPQSLQVIDTVISLVQQNKAVYVPGNHCDKLYRFFLGRNVQVTHGLETTVAEWEQADEKTKTRIRTQFMKLYENAPLYAILDDGKLVIAHAGIRGDYIGKSNQKVKKFVLYGDITGEKHPDGSPVRRDWAKHYRGDALIVYGHTPVKEPRWLNNTVNIDTGCVFGGQLTALRYPEMETVSVPSTMPYVAEKFRPFD.

The protein belongs to the PrpE family. Ni(2+) serves as cofactor.

The enzyme catalyses P(1),P(4)-bis(5'-guanosyl) tetraphosphate + H2O = GMP + GTP + 2 H(+). In terms of biological role, asymmetrically hydrolyzes Ap4p to yield AMP and ATP. This Anoxybacillus flavithermus (strain DSM 21510 / WK1) protein is Bis(5'-nucleosyl)-tetraphosphatase PrpE [asymmetrical].